Reading from the N-terminus, the 192-residue chain is Succinate dehydrogenase cytochrome b560 subunit, mitochondrial (192 aa).

A mitochondrion-targeting transit peptide spans 1–27; sequence MFGRTLNTFTSRNAPLVRNFDKFIVNN. Residues 48–83 are Mitochondrial matrix-facing; it reads YSTQAKKPFTITEKRIDELKTPYQPTSPHLTIYKFP. The chain crosses the membrane as a helical span at residues 84–113; that stretch reads LPAVMSIMHRATGICLALGITGLAGVTLFA. Topologically, residues 114 to 131 are mitochondrial intermembrane; it reads PHDAIHYIQLLHTQYPAL. The helical transmembrane segment at 132–156 threads the bilayer; sequence VYPAKFAVALPLTYHFCTGVRHIIW. His146 provides a ligand contact to heme b. Over 157–164 the chain is Mitochondrial matrix; that stretch reads DETVKGLS. The helical transmembrane segment at 165–186 threads the bilayer; the sequence is ISQIESSGKVLLAVVAVLSTIF. Over 187–189 the chain is Mitochondrial intermembrane; sequence TFV.

Belongs to the cytochrome b560 family. Component of complex II composed of four subunits: the flavoprotein (FP) sdha, iron-sulfur protein (IP) sdhb, and a cytochrome b560 composed of sdhc and sdhd. Heme b is required as a cofactor.

It localises to the mitochondrion inner membrane. The protein operates within carbohydrate metabolism; tricarboxylic acid cycle. In terms of biological role, membrane-anchoring subunit of succinate dehydrogenase (SDH) that is involved in complex II of the mitochondrial electron transport chain and is responsible for transferring electrons from succinate to ubiquinone (coenzyme Q). This Dictyostelium discoideum (Social amoeba) protein is Succinate dehydrogenase cytochrome b560 subunit, mitochondrial (sdhC).